Consider the following 691-residue polypeptide: Amino-acid acetyltransferase, mitochondrial (691 aa).

Over residues 1–27 (MSSTSLAWPRTAKSSLLQSADFSSTSK) the composition is skewed to polar residues. 2 disordered regions span residues 1 to 29 (MSST…SKGY) and 65 to 95 (RLKA…PSGV). Residues 75–87 (QVKEPEKESKDDA) show a composition bias toward basic and acidic residues. In terms of domain architecture, N-acetyltransferase spans 512 to 681 (NRPRMSLDDP…YEAVCRSIQP (170 aa)).

This sequence belongs to the acetyltransferase family.

The protein resides in the mitochondrion. The catalysed reaction is L-glutamate + acetyl-CoA = N-acetyl-L-glutamate + CoA + H(+). It participates in amino-acid biosynthesis; L-arginine biosynthesis; N(2)-acetyl-L-ornithine from L-glutamate: step 1/4. Functionally, N-acetylglutamate synthase involved in arginine biosynthesis. In Aspergillus terreus (strain NIH 2624 / FGSC A1156), this protein is Amino-acid acetyltransferase, mitochondrial (arg2).